The primary structure comprises 367 residues: tRNA/tmRNA (uracil-C(5))-methyltransferase (367 aa).

Residues Gln-190, Tyr-218, Asn-223, Glu-239, and Asp-299 each contribute to the S-adenosyl-L-methionine site. Catalysis depends on Cys-324, which acts as the Nucleophile. Catalysis depends on Glu-358, which acts as the Proton acceptor.

Belongs to the class I-like SAM-binding methyltransferase superfamily. RNA M5U methyltransferase family. TrmA subfamily.

The enzyme catalyses uridine(54) in tRNA + S-adenosyl-L-methionine = 5-methyluridine(54) in tRNA + S-adenosyl-L-homocysteine + H(+). It carries out the reaction uridine(341) in tmRNA + S-adenosyl-L-methionine = 5-methyluridine(341) in tmRNA + S-adenosyl-L-homocysteine + H(+). Its function is as follows. Dual-specificity methyltransferase that catalyzes the formation of 5-methyluridine at position 54 (m5U54) in all tRNAs, and that of position 341 (m5U341) in tmRNA (transfer-mRNA). The chain is tRNA/tmRNA (uracil-C(5))-methyltransferase from Serratia proteamaculans (strain 568).